The chain runs to 612 residues: Rhotekin-2 (612 aa).

The REM-1 domain occupies 3 to 79 (IKRKKIRESA…LRSQMGESNT (77 aa)). Residues 285–392 (DEAMMGFLNQ…WMEAFWQHFY (108 aa)) form the PH domain. 2 disordered regions span residues 483–530 (RNKP…SDKE) and 574–612 (ENKAELDTGTQEPIKPVPTPRQKSLREKLDPRVWLQSQV). A compositionally biased stretch (low complexity) spans 486 to 498 (PPLLSSDDPSTSS).

In Xenopus laevis (African clawed frog), this protein is Rhotekin-2 (rtkn2).